Reading from the N-terminus, the 152-residue chain is Lipoprotein signal peptidase (152 aa).

2 consecutive transmembrane segments (helical) span residues 55–75 (NKMWFFYIITVVFVGFIVFYM) and 85–105 (LGISLGLILGGAIGNFIDRVF). Catalysis depends on residues Asp-111 and Asp-129. Residues 124-144 (VFNIADSALCIGVVLIIIQTL) form a helical membrane-spanning segment.

This sequence belongs to the peptidase A8 family.

It is found in the cell membrane. The enzyme catalyses Release of signal peptides from bacterial membrane prolipoproteins. Hydrolyzes -Xaa-Yaa-Zaa-|-(S,diacylglyceryl)Cys-, in which Xaa is hydrophobic (preferably Leu), and Yaa (Ala or Ser) and Zaa (Gly or Ala) have small, neutral side chains.. It participates in protein modification; lipoprotein biosynthesis (signal peptide cleavage). In terms of biological role, this protein specifically catalyzes the removal of signal peptides from prolipoproteins. This chain is Lipoprotein signal peptidase, found in Bacillus cytotoxicus (strain DSM 22905 / CIP 110041 / 391-98 / NVH 391-98).